The primary structure comprises 44 residues: Photosystem II reaction center protein K (44 aa).

Positions 1-7 are excised as a propeptide; sequence MESLLLA. The chain crosses the membrane as a helical span at residues 23 to 43; it reads FPVIPVFFLLLAFVWQAAVGF.

The protein belongs to the PsbK family. As to quaternary structure, PSII is composed of 1 copy each of membrane proteins PsbA, PsbB, PsbC, PsbD, PsbE, PsbF, PsbH, PsbI, PsbJ, PsbK, PsbL, PsbM, PsbT, PsbX, PsbY, PsbZ, Psb30/Ycf12, at least 3 peripheral proteins of the oxygen-evolving complex and a large number of cofactors. It forms dimeric complexes.

The protein localises to the plastid. The protein resides in the chloroplast thylakoid membrane. In terms of biological role, one of the components of the core complex of photosystem II (PSII). PSII is a light-driven water:plastoquinone oxidoreductase that uses light energy to abstract electrons from H(2)O, generating O(2) and a proton gradient subsequently used for ATP formation. It consists of a core antenna complex that captures photons, and an electron transfer chain that converts photonic excitation into a charge separation. This Thalassiosira pseudonana (Marine diatom) protein is Photosystem II reaction center protein K.